Reading from the N-terminus, the 315-residue chain is 3-oxoacyl-[acyl-carrier-protein] reductase 3, chloroplastic (315 aa).

A chloroplast-targeting transit peptide spans M1–Q55. V77–V101 is a binding site for NADP(+). S209 is a substrate binding site. Residue Y222 is the Proton acceptor of the active site.

The protein belongs to the short-chain dehydrogenases/reductases (SDR) family. Homotetramer.

It localises to the plastid. The protein resides in the chloroplast. The catalysed reaction is a (3R)-hydroxyacyl-[ACP] + NADP(+) = a 3-oxoacyl-[ACP] + NADPH + H(+). It functions in the pathway lipid metabolism; fatty acid biosynthesis. The sequence is that of 3-oxoacyl-[acyl-carrier-protein] reductase 3, chloroplastic (bkr3) from Brassica napus (Rape).